A 507-amino-acid chain; its full sequence is Sugar transport protein 6 (507 aa).

Over 1 to 20 (MAVVVSNANAPAFEAKMTVY) the chain is Cytoplasmic. The next 12 helical transmembrane spans lie at 21–41 (VFIC…DIGI), 78–98 (FLQL…FVAS), 115–135 (IFFL…MLII), 138–158 (LFLG…LSEI), 165–185 (GGLN…ANIV), 199–219 (IALG…LLII), 280–300 (FIIG…AIMF), 318–338 (LSAV…IYLV), 345–365 (FLLL…GIIL), 381–401 (LVVV…WGPL), 418–438 (GFAV…QAFL), and 447–467 (GIFF…FFFI). The Cytoplasmic segment spans residues 468–507 (PETKGIAIDDMRESVWKPHWFWKRYMLPEDDHHDIEKRNA).

The protein belongs to the major facilitator superfamily. Sugar transporter (TC 2.A.1.1) family. As to expression, pollen specific.

The protein resides in the membrane. With respect to regulation, inhibited by uncouplers such as 2,4-dinitrophenol and carbonyl cyanide-m-chlorophenyl-hydrazone. In terms of biological role, mediates an active uptake of hexoses, probably by sugar/hydrogen symport. Can transport glucose, 3-O-methylglucose, mannose, fructose and galactose, and, to a lower extent, xylose and ribulose. The protein is Sugar transport protein 6 (STP6) of Arabidopsis thaliana (Mouse-ear cress).